We begin with the raw amino-acid sequence, 187 residues long: Elongation factor P (187 aa).

The protein belongs to the elongation factor P family.

It is found in the cytoplasm. The protein operates within protein biosynthesis; polypeptide chain elongation. Its function is as follows. Involved in peptide bond synthesis. Stimulates efficient translation and peptide-bond synthesis on native or reconstituted 70S ribosomes in vitro. Probably functions indirectly by altering the affinity of the ribosome for aminoacyl-tRNA, thus increasing their reactivity as acceptors for peptidyl transferase. The polypeptide is Elongation factor P (Parvibaculum lavamentivorans (strain DS-1 / DSM 13023 / NCIMB 13966)).